Here is a 146-residue protein sequence, read N- to C-terminus: Acidic phospholipase A2 S8-51 (146 aa).

An N-terminal signal peptide occupies residues 1–19; the sequence is MYPAHLLVLLAVCVSLLGA. A propeptide spanning residues 20–27 is cleaved from the precursor; sequence ASIPPQPL. Intrachain disulfides connect Cys38/Cys98, Cys54/Cys145, Cys56/Cys72, Cys71/Cys126, Cys78/Cys119, Cys87/Cys112, and Cys105/Cys117. Residues Tyr55, Gly57, and Gly59 each contribute to the Ca(2+) site. His75 is an active-site residue. Asp76 is a binding site for Ca(2+). The active site involves Asp120.

It belongs to the phospholipase A2 family. Group I subfamily. D49 sub-subfamily. The cofactor is Ca(2+). As to expression, expressed by the venom gland.

It localises to the secreted. It catalyses the reaction a 1,2-diacyl-sn-glycero-3-phosphocholine + H2O = a 1-acyl-sn-glycero-3-phosphocholine + a fatty acid + H(+). Snake venom phospholipase A2 (PLA2) that inhibits collagen-induced platelet aggregation. PLA2 catalyzes the calcium-dependent hydrolysis of the 2-acyl groups in 3-sn-phosphoglycerides. In Austrelaps superbus (Lowland copperhead snake), this protein is Acidic phospholipase A2 S8-51.